A 146-amino-acid chain; its full sequence is Kappa-casein (146 aa).

O-linked (GalNAc...) threonine glycosylation is found at threonine 107 and threonine 112. A Phosphoserine; alternate modification is found at serine 125. The O-linked (GalNAc...) serine; alternate glycan is linked to serine 125. An O-linked (GalNAc...) threonine glycan is attached at threonine 142. At serine 143 the chain carries Phosphoserine.

This sequence belongs to the kappa-casein family. In terms of tissue distribution, mammary gland specific. Secreted in milk.

The protein localises to the secreted. Functionally, kappa-casein stabilizes micelle formation, preventing casein precipitation in milk. This chain is Kappa-casein (CSN3), found in Tapirus indicus (Asiatic tapir).